Consider the following 153-residue polypeptide: UPF0178 protein Ccel_2994 (153 aa).

It belongs to the UPF0178 family.

The polypeptide is UPF0178 protein Ccel_2994 (Ruminiclostridium cellulolyticum (strain ATCC 35319 / DSM 5812 / JCM 6584 / H10) (Clostridium cellulolyticum)).